The sequence spans 199 residues: Chaperone protein TorD (199 aa).

This sequence belongs to the TorD/DmsD family. TorD subfamily.

The protein resides in the cytoplasm. Involved in the biogenesis of TorA. Acts on TorA before the insertion of the molybdenum cofactor and, as a result, probably favors a conformation of the apoenzyme that is competent for acquiring the cofactor. This is Chaperone protein TorD from Shigella boydii serotype 18 (strain CDC 3083-94 / BS512).